Consider the following 304-residue polypeptide: Cell surface-binding protein OPG105 (304 aa).

In terms of domain architecture, Alpha-carbonic anhydrase spans 1-235 (MPQQLSPINI…NDDTQVYYSG (235 aa)). Topologically, residues 1–275 (MPQQLSPINI…YQKYIEGNKT (275 aa)) are virion surface. The chain crosses the membrane as a helical span at residues 276 to 294 (FAIIAIVFVFILTAILFLM). Over 295–304 (SRRYSREKQN) the chain is Intravirion.

This sequence belongs to the alpha-carbonic anhydrase family. As to quaternary structure, homodimer; disulfide-linked. Post-translationally, apparently non-glycosylated.

It localises to the virion membrane. Binds to chondroitin sulfate on the cell surface to provide virion attachment to target cell. This chain is Cell surface-binding protein OPG105 (OPG105), found in Vaccinia virus (strain Copenhagen) (VACV).